Reading from the N-terminus, the 123-residue chain is KxDL motif-containing protein LO9-177 (123 aa).

The KxDL motif lies at 78–81 (KDDL).

Belongs to the KXD1 family. As to quaternary structure, homodimer. Component of a nuclear cell elongation controlling complex made of ILI5/BUL1, LO9-177 and BC1. Binds directly to ILI5/BUL1, ILI4/BU1, BUL2 and BUL3. Binds to BC1 in the nucleus. Interacts with BCL1.

It is found in the nucleus. It localises to the cytoplasm. Contributes, together with ILI5/BUL1 and BC1, to the promotion of leaf inclination and grain size by modulating cell elongation. This is KxDL motif-containing protein LO9-177 from Oryza sativa subsp. indica (Rice).